The following is a 415-amino-acid chain: Small RNA 2'-O-methyltransferase (415 aa).

2 residues coordinate S-adenosyl-L-methionine: serine 99 and aspartate 117. Residues glutamate 169, glutamate 172, and histidine 173 each coordinate Mg(2+).

This sequence belongs to the methyltransferase superfamily. HEN1 family. It depends on Mg(2+) as a cofactor.

It is found in the cytoplasm. The catalysed reaction is small RNA 3'-end nucleotide + S-adenosyl-L-methionine = small RNA 3'-end 2'-O-methylnucleotide + S-adenosyl-L-homocysteine + H(+). Functionally, methyltransferase that adds a 2'-O-methyl group at the 3'-end of piRNAs, a class of 24 to 30 nucleotide RNAs that are generated by a Dicer-independent mechanism and are primarily derived from transposons and other repeated sequence elements. This probably protects the 3'-end of piRNAs from uridylation activity and subsequent degradation. Stabilization of piRNAs is essential for gametogenesis. This chain is Small RNA 2'-O-methyltransferase, found in Bombyx mori (Silk moth).